The chain runs to 282 residues: Elongation factor Ts (282 aa).

The interval 80–83 (TDFV) is involved in Mg(2+) ion dislocation from EF-Tu.

Belongs to the EF-Ts family.

The protein localises to the cytoplasm. Functionally, associates with the EF-Tu.GDP complex and induces the exchange of GDP to GTP. It remains bound to the aminoacyl-tRNA.EF-Tu.GTP complex up to the GTP hydrolysis stage on the ribosome. This chain is Elongation factor Ts, found in Protochlamydia amoebophila (strain UWE25).